The chain runs to 676 residues: MAAHHRQNTAGRRKVQVSYVIRDEVEKYNRNGVNALQLDPALNRLFTAGRDSIIRIWSVNQHKQDPYIASMEHHTDWVNDVVLCCNGKTLISASSDTTVKVWNAHKGFCMSTLRTHKDYVKALAYAKDKELVASAGLDRQIFLWDVNTLTALTASNNTVTTSSLSGNKDSIYSLAMNQLGTIIVSGSTEKVLRVWDPRTCAKLMKLKGHTDNVKALLLHRDGTQCLSGSSDGTIRLWSLGQQRCIATYRVHDEGVWALQVNDAFTHVYSGGRDRKIYCTDLRNPDIRVLICEEKAPVLKMELDRSADPPPAIWVATTKSTVNKWTLKGIHNFRASGDYDNDCTNPITPLCTQPDQVIKGGASIIQCHILNDKRHILTKDTNNNVAYWDVLKACKVEDLGKVDFEDEIKKRFKMVYVPNWFSVDLKTGMLTITLDESDCFAAWVSAKDAGFSSPDGSDPKLNLGGLLLQALLEYWPRTHVTPMDEEENEVNHVSGGQESRVQKGNGYFQVPPHTPVIFGEAGGRTLFRLLCRDSGGETEAMLLNETVPQWVIDITVDKNMPKFNKIPFYLQPHASSGAKTLKKDRLSASDMLQVRKVMEHVYEKIINLDNESQTTSSSNNEKPEQEKEEDIAVLAEEKIELLCQDQVLDPNMDLRTVKHFIWKSGGDLTLHYRQKST.

At Tyr-28 the chain carries Phosphotyrosine. WD repeat units lie at residues 28-67 (YNRN…QDPY), 73-112 (HHTD…CMST), 115-154 (THKD…ALTA), 166-205 (GNKD…KLMK), 208-247 (GHTD…CIAT), 250-289 (VHDE…IRVL), 292-334 (EEKA…NFRA), and 358-397 (KGGA…KVED). N6-acetyllysine is present on Lys-214. At Lys-578 the chain carries N6-acetyllysine. The tract at residues 607–628 (LDNESQTTSSSNNEKPEQEKEE) is disordered. Residues 609 to 619 (NESQTTSSSNN) are compositionally biased toward low complexity. Phosphothreonine is present on Thr-613.

The protein belongs to the WD repeat WDR48 family. Interacts with USP46. Interacts with USP1. Interacts with USP12. Component of the USP12-WDR20-WDR48 deubiquitinating complex. Component of the USP12-DMWD-WDR48 deubiquitinating complex. Interacts with PHLPP1. Interacts with RAD51AP1; the interaction is direct and promotes formation of a trimeric complex with RAD51 via RAD51AP1. Interacts with ATAD5; the interaction regulates USP1-mediated PCNA deubiquitination. Interacts with RAD51; the interaction is enhanced under replication stress. Interacts with ITCH; the interaction is more efficient when both USP12 and WDR48/UAF1 are involved and may facilitate recruitment of the USP12 deubiquitinating complex to Notch.

It is found in the nucleus. The protein localises to the cytoplasm. It localises to the lysosome. The protein resides in the late endosome. In terms of biological role, regulator of deubiquitinating complexes, which acts as a strong activator of USP1, USP12 and USP46. Enhances the USP1-mediated deubiquitination of FANCD2; USP1 being almost inactive by itself. Activates deubiquitination by increasing the catalytic turnover without increasing the affinity of deubiquitinating enzymes for the substrate. Also activates deubiquitinating activity of complexes containing USP12. Docks at the distal end of the USP12 fingers domain and induces a cascade of structural changes leading to the activation of the enzyme. Together with RAD51AP1, promotes DNA repair by stimulating RAD51-mediated homologous recombination. Binds single-stranded DNA (ssDNA) and double-stranded DNA (dsDNA). DNA-binding is required both for USP1-mediated deubiquitination of FANCD2 and stimulation of RAD51-mediated homologous recombination: both WDR48/UAF1 and RAD51AP1 have coordinated role in DNA-binding during these processes. Together with ATAD5 and by regulating USP1 activity, has a role in PCNA-mediated translesion synthesis (TLS) by deubiquitinating monoubiquitinated PCNA. Together with ATAD5, has a role in recruiting RAD51 to stalled forks during replication stress. This chain is WD repeat-containing protein 48 (Wdr48), found in Mus musculus (Mouse).